We begin with the raw amino-acid sequence, 359 residues long: 4-hydroxy-3-methylbut-2-en-1-yl diphosphate synthase (flavodoxin) (359 aa).

[4Fe-4S] cluster is bound by residues cysteine 264, cysteine 267, cysteine 299, and glutamate 306.

The protein belongs to the IspG family. [4Fe-4S] cluster is required as a cofactor.

It carries out the reaction (2E)-4-hydroxy-3-methylbut-2-enyl diphosphate + oxidized [flavodoxin] + H2O + 2 H(+) = 2-C-methyl-D-erythritol 2,4-cyclic diphosphate + reduced [flavodoxin]. It functions in the pathway isoprenoid biosynthesis; isopentenyl diphosphate biosynthesis via DXP pathway; isopentenyl diphosphate from 1-deoxy-D-xylulose 5-phosphate: step 5/6. In terms of biological role, converts 2C-methyl-D-erythritol 2,4-cyclodiphosphate (ME-2,4cPP) into 1-hydroxy-2-methyl-2-(E)-butenyl 4-diphosphate. In Helicobacter pylori (strain J99 / ATCC 700824) (Campylobacter pylori J99), this protein is 4-hydroxy-3-methylbut-2-en-1-yl diphosphate synthase (flavodoxin).